The sequence spans 714 residues: Fatty acid oxidation complex subunit alpha (714 aa).

Positions 1–190 are enoyl-CoA hydratase; sequence MEMTSAFTLN…KLGLVDDVVP (190 aa). The 3-hydroxyacyl-CoA dehydrogenase stretch occupies residues 306 to 714; it reads APLNSVGILG…FWKTTATDLQ (409 aa).

In the N-terminal section; belongs to the enoyl-CoA hydratase/isomerase family. It in the central section; belongs to the 3-hydroxyacyl-CoA dehydrogenase family. In terms of assembly, heterotetramer of two alpha chains (FadJ) and two beta chains (FadI).

The protein localises to the cytoplasm. It carries out the reaction a (3S)-3-hydroxyacyl-CoA = a (2E)-enoyl-CoA + H2O. It catalyses the reaction a 4-saturated-(3S)-3-hydroxyacyl-CoA = a (3E)-enoyl-CoA + H2O. The catalysed reaction is a (3S)-3-hydroxyacyl-CoA + NAD(+) = a 3-oxoacyl-CoA + NADH + H(+). The enzyme catalyses (3S)-3-hydroxybutanoyl-CoA = (3R)-3-hydroxybutanoyl-CoA. It participates in lipid metabolism; fatty acid beta-oxidation. Catalyzes the formation of a hydroxyacyl-CoA by addition of water on enoyl-CoA. Also exhibits 3-hydroxyacyl-CoA epimerase and 3-hydroxyacyl-CoA dehydrogenase activities. This Escherichia coli O8 (strain IAI1) protein is Fatty acid oxidation complex subunit alpha.